A 137-amino-acid polypeptide reads, in one-letter code: Large ribosomal subunit protein uL16 (137 aa).

The protein belongs to the universal ribosomal protein uL16 family. As to quaternary structure, part of the 50S ribosomal subunit.

Binds 23S rRNA and is also seen to make contacts with the A and possibly P site tRNAs. The chain is Large ribosomal subunit protein uL16 from Lactococcus lactis subsp. cremoris (strain SK11).